A 794-amino-acid polypeptide reads, in one-letter code: Zinc finger Y-chromosomal protein 1 (794 aa).

A Nuclear localization signal motif is present at residues 380–389 (TKQKLKKKRR). C2H2-type zinc fingers lie at residues 411–433 (YPCM…MKNH), 442–464 (YRCT…LESH), 477–499 (LECE…KLTH), 508–531 (HICK…LAVH), 537–559 (HICV…MRTH), 565–588 (YLCQ…KTKH), 594–616 (FKCD…AILH), 622–645 (HQCL…ISVH), 651–673 (HKCE…EAAH), 679–702 (HQCR…LSVH), 708–730 (YRCK…MKTH), 736–759 (YQCE…ISIH), and 765–788 (HRCD…LKHH).

It belongs to the krueppel C2H2-type zinc-finger protein family. ZFX/ZFY subfamily.

The protein resides in the nucleus. Its function is as follows. Probable transcriptional activator. This chain is Zinc finger Y-chromosomal protein 1 (zfy1), found in Xenopus laevis (African clawed frog).